We begin with the raw amino-acid sequence, 1099 residues long: Carbamoyl phosphate synthase large chain (1099 aa).

The tract at residues 1-402 (MPKRTDLKSV…ALQKALRSLE (402 aa)) is carboxyphosphate synthetic domain. The ATP site is built by Arg129, Arg169, Gly175, Gly176, Glu208, Ile210, Glu215, Gly241, Val242, His243, Gln285, and Glu299. An ATP-grasp 1 domain is found at 133 to 328 (KGVVERCGAE…IAKIATKLSL (196 aa)). Residues Gln285, Glu299, and Asn301 each contribute to the Mg(2+) site. Mn(2+) contacts are provided by Gln285, Glu299, and Asn301. Residues 403-546 (QKGSQLDFSH…YHYSSYDEED (144 aa)) form an oligomerization domain region. The carbamoyl phosphate synthetic domain stretch occupies residues 547-950 (EVALHSKPSI…AFAKSQAAAN (404 aa)). In terms of domain architecture, ATP-grasp 2 spans 677–868 (SRVLDEAGLI…MAKAAALIGT (192 aa)). ATP contacts are provided by Arg713, Arg752, Leu754, Glu759, Gly784, Ile785, His786, Ser787, Gln827, and Glu839. Positions 827, 839, and 841 each coordinate Mg(2+). Residues Gln827, Glu839, and Asn841 each coordinate Mn(2+). The MGS-like domain occupies 951-1099 (NALPTEGKIF…AENLKALQNG (149 aa)). The allosteric domain stretch occupies residues 951–1099 (NALPTEGKIF…AENLKALQNG (149 aa)).

Belongs to the CarB family. As to quaternary structure, composed of two chains; the small (or glutamine) chain promotes the hydrolysis of glutamine to ammonia, which is used by the large (or ammonia) chain to synthesize carbamoyl phosphate. Tetramer of heterodimers (alpha,beta)4. Mg(2+) is required as a cofactor. It depends on Mn(2+) as a cofactor.

It carries out the reaction hydrogencarbonate + L-glutamine + 2 ATP + H2O = carbamoyl phosphate + L-glutamate + 2 ADP + phosphate + 2 H(+). It catalyses the reaction hydrogencarbonate + NH4(+) + 2 ATP = carbamoyl phosphate + 2 ADP + phosphate + 2 H(+). The protein operates within amino-acid biosynthesis; L-arginine biosynthesis; carbamoyl phosphate from bicarbonate: step 1/1. Its pathway is pyrimidine metabolism; UMP biosynthesis via de novo pathway; (S)-dihydroorotate from bicarbonate: step 1/3. Its function is as follows. Large subunit of the glutamine-dependent carbamoyl phosphate synthetase (CPSase). CPSase catalyzes the formation of carbamoyl phosphate from the ammonia moiety of glutamine, carbonate, and phosphate donated by ATP, constituting the first step of 2 biosynthetic pathways, one leading to arginine and/or urea and the other to pyrimidine nucleotides. The large subunit (synthetase) binds the substrates ammonia (free or transferred from glutamine from the small subunit), hydrogencarbonate and ATP and carries out an ATP-coupled ligase reaction, activating hydrogencarbonate by forming carboxy phosphate which reacts with ammonia to form carbamoyl phosphate. The polypeptide is Carbamoyl phosphate synthase large chain (Arthrobacter sp. (strain FB24)).